We begin with the raw amino-acid sequence, 166 residues long: NAD(P)H-quinone oxidoreductase subunit I, chloroplastic (166 aa).

2 consecutive 4Fe-4S ferredoxin-type domains span residues Gly55 to Lys84 and Leu95 to Glu124. [4Fe-4S] cluster-binding residues include Cys64, Cys67, Cys70, Cys74, Cys104, Cys107, Cys110, and Cys114.

This sequence belongs to the complex I 23 kDa subunit family. NDH is composed of at least 16 different subunits, 5 of which are encoded in the nucleus. It depends on [4Fe-4S] cluster as a cofactor.

Its subcellular location is the plastid. The protein resides in the chloroplast thylakoid membrane. The catalysed reaction is a plastoquinone + NADH + (n+1) H(+)(in) = a plastoquinol + NAD(+) + n H(+)(out). The enzyme catalyses a plastoquinone + NADPH + (n+1) H(+)(in) = a plastoquinol + NADP(+) + n H(+)(out). Functionally, NDH shuttles electrons from NAD(P)H:plastoquinone, via FMN and iron-sulfur (Fe-S) centers, to quinones in the photosynthetic chain and possibly in a chloroplast respiratory chain. The immediate electron acceptor for the enzyme in this species is believed to be plastoquinone. Couples the redox reaction to proton translocation, and thus conserves the redox energy in a proton gradient. This Espeletia timotensis (Andean giant rosette) protein is NAD(P)H-quinone oxidoreductase subunit I, chloroplastic.